Consider the following 623-residue polypeptide: DNA-directed RNA polymerase subunit beta' (623 aa).

Zn(2+) is bound by residues Cys-70, Cys-72, Cys-85, and Cys-88. 3 residues coordinate Mg(2+): Asp-466, Asp-468, and Asp-470.

The protein belongs to the RNA polymerase beta' chain family. RpoC1 subfamily. In plastids the minimal PEP RNA polymerase catalytic core is composed of four subunits: alpha, beta, beta', and beta''. When a (nuclear-encoded) sigma factor is associated with the core the holoenzyme is formed, which can initiate transcription. The cofactor is Mg(2+). Requires Zn(2+) as cofactor.

The protein localises to the plastid. The protein resides in the chloroplast. It catalyses the reaction RNA(n) + a ribonucleoside 5'-triphosphate = RNA(n+1) + diphosphate. Functionally, DNA-dependent RNA polymerase catalyzes the transcription of DNA into RNA using the four ribonucleoside triphosphates as substrates. This chain is DNA-directed RNA polymerase subunit beta', found in Rhodomonas salina (Cryptomonas salina).